A 195-amino-acid chain; its full sequence is Myelin-associated neurite-outgrowth inhibitor (195 aa).

Residues 1-18 (MNPVYSPGSSGVPYANAK) lie on the Cytoplasmic side of the membrane. A helical membrane pass occupies residues 19–43 (GIGYPAGFPMGYAAAAPAYSPNMYA). Over 44–143 (GPNPAFQPGY…APIPQPRGNG (100 aa)) the chain is Extracellular. A helical transmembrane segment spans residues 144 to 162 (VAMGMVAGTTMAMSAGTLL). Residues 163-195 (TSHYPTPVAPHQVTMPTYRPPGTPTYSYVPPQW) lie on the Cytoplasmic side of the membrane.

This sequence belongs to the FAM168 family.

It is found in the cytoplasm. The protein localises to the perinuclear region. The protein resides in the cell membrane. Its subcellular location is the cell projection. It localises to the axon. Inhibitor of neuronal axonal outgrowth. This is Myelin-associated neurite-outgrowth inhibitor (fam168b) from Xenopus tropicalis (Western clawed frog).